A 136-amino-acid polypeptide reads, in one-letter code: Large ribosomal subunit protein uL16 (136 aa).

This sequence belongs to the universal ribosomal protein uL16 family. As to quaternary structure, part of the 50S ribosomal subunit.

Its function is as follows. Binds 23S rRNA and is also seen to make contacts with the A and possibly P site tRNAs. The sequence is that of Large ribosomal subunit protein uL16 from Actinobacillus succinogenes (strain ATCC 55618 / DSM 22257 / CCUG 43843 / 130Z).